The following is a 132-amino-acid chain: Translation initiation factor 5A (132 aa).

Lys-37 is modified (hypusine).

This sequence belongs to the eIF-5A family.

The protein resides in the cytoplasm. Functions by promoting the formation of the first peptide bond. This is Translation initiation factor 5A (eif5a) from Methanocaldococcus jannaschii (strain ATCC 43067 / DSM 2661 / JAL-1 / JCM 10045 / NBRC 100440) (Methanococcus jannaschii).